Reading from the N-terminus, the 732-residue chain is Aldehyde oxidoreductase molybdenum-binding subunit PaoC (732 aa).

Residues 241–242, 468–470, 511–512, 615–621, glutamine 625, and 688–691 each bind Mo-molybdopterin cytosine dinucleotide; these read GF, IGT, GA, RILNPKT, and KGVG. The active-site Proton acceptor is the glutamate 692.

It belongs to the xanthine dehydrogenase family. As to quaternary structure, heterotrimer composed of PaoA, PaoB and PaoC. Requires Mo-molybdopterin cytosine dinucleotide as cofactor.

The protein localises to the periplasm. The catalysed reaction is an aldehyde + A + H2O = a carboxylate + AH2 + H(+). Oxidizes aldehydes to the corresponding carboxylic acids with a preference for aromatic aldehydes. It might play a role in the detoxification of aldehydes to avoid cell damage. This is Aldehyde oxidoreductase molybdenum-binding subunit PaoC from Escherichia coli O157:H7.